Here is a 386-residue protein sequence, read N- to C-terminus: Signal transduction histidine-protein kinase/phosphatase DegS (386 aa).

The Histidine kinase domain maps to 188 to 384 (KLSREIHDGP…TIIISIPITT (197 aa)). H194 is subject to Phosphohistidine; by autocatalysis.

Post-translationally, autophosphorylated.

The protein resides in the cytoplasm. The catalysed reaction is ATP + protein L-histidine = ADP + protein N-phospho-L-histidine.. Functionally, member of the two-component regulatory system DegS/DegU, which plays an important role in the transition growth phase. Acts as both a protein kinase that undergoes autophosphorylation and subsequently transfers the phosphate to DegU, and a protein phosphatase that dephosphorylates phospho-DegU. This chain is Signal transduction histidine-protein kinase/phosphatase DegS (degS), found in Brevibacillus brevis (Bacillus brevis).